Consider the following 119-residue polypeptide: Holo-[acyl-carrier-protein] synthase (119 aa).

Residues aspartate 8 and glutamate 50 each contribute to the Mg(2+) site.

This sequence belongs to the P-Pant transferase superfamily. AcpS family. It depends on Mg(2+) as a cofactor.

Its subcellular location is the cytoplasm. The enzyme catalyses apo-[ACP] + CoA = holo-[ACP] + adenosine 3',5'-bisphosphate + H(+). In terms of biological role, transfers the 4'-phosphopantetheine moiety from coenzyme A to a Ser of acyl-carrier-protein. This chain is Holo-[acyl-carrier-protein] synthase, found in Clavibacter sepedonicus (Clavibacter michiganensis subsp. sepedonicus).